The following is a 252-amino-acid chain: MMEDKITIEKLNLYYSDFHALHDINMHIQKNEITAFIGPSGCGKSTLLRSLNRMNDLVEGCRIDGSIKLDGTDIYNGDLDVTVLRQRVGMVFQRPNPFPMSVYDNVAYGPRIHGITDKKELDEIVETSLKQAAIWDDLKDRLKKSALGLSGGQQQRLCIARALAVKPEVLLMDEPTSALDPISTSKIEELALELKKNYTIVIVTHNMQQAVRISDKTGFFLLGDLVEFGETDQLFSMPKDERTEKYITGRFG.

The ABC transporter domain maps to 6–247 (ITIEKLNLYY…PKDERTEKYI (242 aa)). Residue 38–45 (GPSGCGKS) participates in ATP binding.

This sequence belongs to the ABC transporter superfamily. Phosphate importer (TC 3.A.1.7) family. The complex is composed of two ATP-binding proteins (PstB), two transmembrane proteins (PstC and PstA) and a solute-binding protein (PstS).

Its subcellular location is the cell membrane. It catalyses the reaction phosphate(out) + ATP + H2O = ADP + 2 phosphate(in) + H(+). In terms of biological role, part of the ABC transporter complex PstSACB involved in phosphate import. Responsible for energy coupling to the transport system. The chain is Phosphate import ATP-binding protein PstB from Lactobacillus delbrueckii subsp. bulgaricus (strain ATCC 11842 / DSM 20081 / BCRC 10696 / JCM 1002 / NBRC 13953 / NCIMB 11778 / NCTC 12712 / WDCM 00102 / Lb 14).